A 539-amino-acid chain; its full sequence is uncharacterized protein (539 aa).

ABC transporter domains are found at residues 9 to 276 (LEVK…EFKK) and 288 to 536 (IKLE…QEMF). ATP contacts are provided by residues 41-48 (GKSGAGKS) and 325-332 (GTSGAGKT).

This sequence belongs to the ABC transporter superfamily.

This is an uncharacterized protein from Methanocaldococcus jannaschii (strain ATCC 43067 / DSM 2661 / JAL-1 / JCM 10045 / NBRC 100440) (Methanococcus jannaschii).